We begin with the raw amino-acid sequence, 147 residues long: D-aminoacyl-tRNA deacylase (147 aa).

Positions 136–137 match the Gly-cisPro motif, important for rejection of L-amino acids motif; sequence GP.

The protein belongs to the DTD family. As to quaternary structure, homodimer.

It localises to the cytoplasm. The enzyme catalyses glycyl-tRNA(Ala) + H2O = tRNA(Ala) + glycine + H(+). It catalyses the reaction a D-aminoacyl-tRNA + H2O = a tRNA + a D-alpha-amino acid + H(+). Functionally, an aminoacyl-tRNA editing enzyme that deacylates mischarged D-aminoacyl-tRNAs. Also deacylates mischarged glycyl-tRNA(Ala), protecting cells against glycine mischarging by AlaRS. Acts via tRNA-based rather than protein-based catalysis; rejects L-amino acids rather than detecting D-amino acids in the active site. By recycling D-aminoacyl-tRNA to D-amino acids and free tRNA molecules, this enzyme counteracts the toxicity associated with the formation of D-aminoacyl-tRNA entities in vivo and helps enforce protein L-homochirality. This chain is D-aminoacyl-tRNA deacylase, found in Streptococcus agalactiae serotype III (strain NEM316).